Here is a 464-residue protein sequence, read N- to C-terminus: Zinc transporter 6 (464 aa).

Residues 1-33 (MGTIYLFRKTQRSLLGKLTQEFRLVTADRRSWK) lie on the Cytoplasmic side of the membrane. A helical membrane pass occupies residues 34-54 (ILLFGAINVVCTGFLLTWCSS). The Extracellular segment spans residues 55–64 (TNSMALTAYT). Residues 65–85 (YLTIFDLFSLITCLISYWVMM) traverse the membrane as a helical segment. At 86–98 (KKPSPTYSFGFER) the chain is on the cytoplasmic side. The helical transmembrane segment at 99–119 (FEVLSVFASTVLAQLGALFIL) threads the bilayer. Topologically, residues 120-134 (KESAERFVEQPEIHT) are extracellular. Residues 135 to 155 (GRLLVGTFVALCFNLFSMLSI) traverse the membrane as a helical segment. At 156–200 (RNKPFAYVSEAASTSWLQEHVADLSRSLCGIIPGLSSIFLPRMNP) the chain is on the cytoplasmic side. Residues 201-221 (FVLIDIAGALALCITYMLIEI) form a helical membrane-spanning segment. Residues 222–228 (NNYFAVD) lie on the Extracellular side of the membrane. A helical membrane pass occupies residues 229–249 (TASAIAIAVMTFGTMYPMSVY). Topologically, residues 250–464 (SGKVLLQTTP…TPGQFTQFKQ (215 aa)) are cytoplasmic.

The protein belongs to the cation diffusion facilitator (CDF) transporter (TC 2.A.4) family. SLC30A subfamily. In terms of assembly, heterodimer with SLC30A5; form a functional zinc ion transmembrane transporter.

It localises to the golgi apparatus. The protein localises to the trans-Golgi network membrane. Functionally, has probably no intrinsic transporter activity but together with SLC30A5 forms a functional zinc ion:proton antiporter heterodimer, mediating zinc entry into the lumen of organelles along the secretory pathway. As part of that zinc ion:proton antiporter, contributes to zinc ion homeostasis within the early secretory pathway and regulates the activation and folding of enzymes like alkaline phosphatases and enzymes involved in phosphatidylinositol glycan anchor biosynthesis. This chain is Zinc transporter 6 (slc30a6), found in Xenopus tropicalis (Western clawed frog).